Reading from the N-terminus, the 82-residue chain is Progonadoliberin-3 (82 aa).

Residues 1–23 (MDLSNRTVVQVVVLALVAQVTLS) form the signal peptide. Residue Gln24 is modified to Pyrrolidone carboxylic acid. Position 33 is a glycine amide (Gly33).

This sequence belongs to the GnRH family.

It localises to the secreted. Functionally, stimulates the secretion of gonadotropins. The polypeptide is Progonadoliberin-3 (gnrh3) (Salmo trutta (Brown trout)).